We begin with the raw amino-acid sequence, 124 residues long: Small ribosomal subunit protein bS16 (124 aa).

The segment covering L81 to P90 has biased composition (basic residues). Residues L81–E124 are disordered. The segment covering H91 to E101 has biased composition (basic and acidic residues). Residues R102–E124 are compositionally biased toward low complexity.

The protein belongs to the bacterial ribosomal protein bS16 family.

This is Small ribosomal subunit protein bS16 from Bartonella tribocorum (strain CIP 105476 / IBS 506).